Reading from the N-terminus, the 371-residue chain is 4-hydroxy-3-methylbut-2-en-1-yl diphosphate synthase (flavodoxin) (371 aa).

Positions 270, 273, 305, and 312 each coordinate [4Fe-4S] cluster.

Belongs to the IspG family. The cofactor is [4Fe-4S] cluster.

The enzyme catalyses (2E)-4-hydroxy-3-methylbut-2-enyl diphosphate + oxidized [flavodoxin] + H2O + 2 H(+) = 2-C-methyl-D-erythritol 2,4-cyclic diphosphate + reduced [flavodoxin]. The protein operates within isoprenoid biosynthesis; isopentenyl diphosphate biosynthesis via DXP pathway; isopentenyl diphosphate from 1-deoxy-D-xylulose 5-phosphate: step 5/6. Functionally, converts 2C-methyl-D-erythritol 2,4-cyclodiphosphate (ME-2,4cPP) into 1-hydroxy-2-methyl-2-(E)-butenyl 4-diphosphate. In Shewanella woodyi (strain ATCC 51908 / MS32), this protein is 4-hydroxy-3-methylbut-2-en-1-yl diphosphate synthase (flavodoxin).